Reading from the N-terminus, the 114-residue chain is MTAPALSARGAYRQILRATRIAFHEDTRVLLAARQEARRQFDEHKRVGIDTPMQINHAIEVASILKHNIVQGVKLEGDEAAKWELRIHDDIERGDNDSIKHAGKDIKIHKACSA.

A mitochondrion-targeting transit peptide spans Met1 to Ala18.

This sequence belongs to the complex I LYR family. MZM1 subfamily. As to quaternary structure, interacts with RIP1.

Its subcellular location is the mitochondrion matrix. In terms of biological role, assembly factor required for Rieske Fe-S protein RIP1 incorporation into the cytochrome b-c1 (CIII) complex. Functions as a chaperone, binding to this subunit within the mitochondrial matrix and stabilizing it prior to its translocation and insertion into the late CIII dimeric intermediate within the mitochondrial inner membrane. Modulates the mitochondrial matrix zinc pool. The protein is Mitochondrial zinc maintenance protein 1, mitochondrial (MZM1) of Aspergillus flavus (strain ATCC 200026 / FGSC A1120 / IAM 13836 / NRRL 3357 / JCM 12722 / SRRC 167).